Here is a 1175-residue protein sequence, read N- to C-terminus: Atrophin-1 (1175 aa).

Disordered stretches follow at residues M1–S595, S608–N752, and V770–P847. The short motif at R16–R32 is the Nuclear localization signal element. Basic and acidic residues predominate over residues K17–S29. S34 is subject to Phosphoserine. The segment covering G45–S63 has biased composition (basic and acidic residues). Phosphoserine is present on residues S77, S79, S101, S103, and S107. Residues L108–N128 show a composition bias toward basic and acidic residues. Over residues R129 to S152 the composition is skewed to polar residues. Composition is skewed to pro residues over residues P158 to S174 and G208 to H217. Low complexity-rich tracts occupy residues G240–K253 and I262–P273. A compositionally biased stretch (pro residues) spans P345–R374. Residues S378–S396 are compositionally biased toward low complexity. Positions S416–W437 are enriched in polar residues. The span at T476–G491 shows a compositional bias: basic residues. An involved in binding BAIAP2 region spans residues H503 to P553. The span at P527–H539 shows a compositional bias: pro residues. Residues A547–Y584 show a composition bias toward low complexity. S617 carries the post-translational modification Phosphoserine. K626 is modified (N6-acetyllysine). Residue T638 is modified to Phosphothreonine. S646 is subject to Phosphoserine. T654 is modified (phosphothreonine). 2 stretches are compositionally biased toward pro residues: residues L693–G703 and P722–K737. S724 carries the post-translational modification Phosphoserine; by MAPK8. Phosphoserine is present on residues S731 and S733. Positions K780–V824 are enriched in basic and acidic residues. The required for interaction with FAT1 stretch occupies residues D864 to V879. S881 carries the post-translational modification Phosphoserine. A disordered region spans residues P913 to K932. Positions A914–K932 are enriched in basic and acidic residues. The short motif at A1018–R1026 is the Nuclear export signal element. R1100 carries the post-translational modification Asymmetric dimethylarginine. K1168 participates in a covalent cross-link: Glycyl lysine isopeptide (Lys-Gly) (interchain with G-Cter in SUMO2).

Interacts with BAIAP2, WWP1, WWP2, WWP3 and RERE. Interacts (via its N-terminus) with MTG8; the interaction enhances transcriptional repression of MTG8. Interacts with PQBP1. Interacts with NR2E1; the interaction represses the transcriptional activity of NR2E1. Interacts with FAT1 (via a C-terminal domain). Post-translationally, phosphorylated in vitro by MAPK8/JNK1 on Ser-724. Widely expressed. Most abundant in the brain.

It is found in the cytoplasm. The protein resides in the perinuclear region. It localises to the cell junction. Its subcellular location is the nucleus. Functionally, transcriptional corepressor. Corepressor of MTG8 transcriptional repression. Has some intrinsic repression activity which is independent of the number of the poly-Q repeats. Recruits NR2E1 to repress transcription. Promotes vascular smooth cell (VSMC) migration and orientation. In Mus musculus (Mouse), this protein is Atrophin-1 (Atn1).